The sequence spans 318 residues: Homeobox protein Nkx-2.5 (318 aa).

Positions 137–196 form a DNA-binding region, homeobox; sequence RRKPRVLFSQAQVYELERRFKQQRYLSAPERDQLASVLKLTSTQVKIWFQNRRYKCKRQR.

It belongs to the NK-2 homeobox family. As to quaternary structure, homodimer (via the homeobox); binds DNA as homodimer. Interacts (via the homeobox) with TBX5 (via the T-box); this complex binds DNA. Interacts with HIPK1 and HIPK2, but not HIPK3. Interacts with the C-terminal zinc finger of GATA4 through its homeobox domain. Also interacts with JARID2 which represses its ability to activate transcription of ANF. Interacts with FBLIM1. Interacts with TBX18. Interacts with histone methyltransferase NSD2 (via HMG box). Interacts with NEDD9. Interacts with TBX1. In terms of tissue distribution, predominantly in the adult and embryonic heart, and to a lesser extent in lingual muscle, spleen and stomach.

It is found in the nucleus. Functionally, transcription factor required for the development of the heart and the spleen. During heart development, acts as a transcriptional activator of NPPA/ANF in cooperation with GATA4. May cooperate with TBX2 to negatively modulate expression of NPPA/ANF in the atrioventricular canal. Binds to the core DNA motif of NPPA promoter. Together with PBX1, required for spleen development through a mechanism that involves CDKN2B repression. Positively regulates transcription of genes such as COL3A1 and MMP2, resulting in increased pulmonary endothelial fibrosis in response to hypoxia. This is Homeobox protein Nkx-2.5 (Nkx2-5) from Mus musculus (Mouse).